We begin with the raw amino-acid sequence, 1183 residues long: Spermatogenesis-associated protein 31G1 (1183 aa).

6 disordered regions span residues 109–153, 469–555, 661–686, 843–884, 973–1032, and 1048–1087; these read TPIG…FPTF, LMPA…SPWA, TVDDVPRSEATGKNTDNTKKCSSSEP, ASQG…VSEV, CLHS…TGLL, and QKRGSSRKSKAEKCGRTARLGSPTNTRENNPAQACRPAEA. The span at 124-134 shows a compositional bias: basic and acidic residues; sequence CRSEGRPRATE. Residues 135–153 are compositionally biased toward polar residues; that stretch reads TQEQVLIQSPSPSRSFPTF. The segment covering 487-509 has biased composition (basic and acidic residues); the sequence is NPKERLSAPKDVRENLGYREHPH. Polar residues predominate over residues 671-685; sequence TGKNTDNTKKCSSSE. A compositionally biased stretch (pro residues) spans 847–858; that stretch reads PNPPAVNPPQPT. The segment covering 975–984 has biased composition (polar residues); the sequence is HSSSQPQAQA. Over residues 993–1002 the composition is skewed to basic residues; it reads QKSKRLKRKA. The segment covering 1069-1079 has biased composition (polar residues); that stretch reads SPTNTRENNPA.

Expressed in kidney and testis. Expressed at lower levels in stomach, intestine, epididymis and ovary. Expressed at very low levels in heart and spleen.

Dispensable for normal development and fertility. The polypeptide is Spermatogenesis-associated protein 31G1 (Spata31g1) (Mus musculus (Mouse)).